We begin with the raw amino-acid sequence, 436 residues long: MTSVPIFESVSRFLPPANEDEKFWWKVTGRHMARMMHEAGYPEDRQVECLLFHRFKVVPCLGPRPHSDTPWYKSRVGGGAADGCPINYSWRFGTADRRPHIRNFIEPLGALTNTSADPLNEVATKALLHDYSMTLPNVDLEAFWTFAPHYRPRIIEKADMEKLAGASLLVGAEMSPDSHTIDIKAYMYPRVPSQTSQLLTTILPQAMRDAYGEDVCLDSLNFVHDFMTKDPQGCQLVLTGTTGIDCCKLQDTRVKIYVITRNTSFDHIAAIVTLGGRRPISEELLGQLKALWYELKGAPAELPSSEQLPVQTKPDGSKNPIVVPFYFDIQPRLALPDVKAYIDVSTSPVSDLAAANAVVCHLEQHGSGQNPRAYLNVLKDITPVEELETQKGALAFYSVAVKKNELDITSYFNPQVYKRYFAHEVQLNGQRRSVFE.

It belongs to the tryptophan dimethylallyltransferase family.

It functions in the pathway secondary metabolite biosynthesis. In terms of biological role, prenyltransferase; part of the gene cluster that mediates the biosynthesis of neosartoricin B, a prenylated anthracenone that probably exhibits T-cell antiproliferative activity, suggestive of a physiological role as an immunosuppressive agent. The non-reducing polyketide synthase nscA probably synthesizes and cyclizes the decaketide backbone. The hydrolase nscB then mediates the product release through hydrolysis followed by spontaneous decarboxylation. The prenyltransferase nscD catalyzes the addition of the dimethylallyl group to the aromatic C5. The FAD-dependent monooxygenase nscC is then responsible for the stereospecific hydroxylation at C2. Neosartoricin B can be converted into two additional compounds neosartoricins C and D. Neosartoricin C is a spirocyclic compound that is cyclized through the attack of C3 hydroxyl on C14, followed by dehydration. On the other hand, neosartoricin D is a further cyclized compound in which attack of C2 on C14 in neosartoricin C results in the formation of the acetal-containing dioxabicyclo-octanone ring. Both of these compounds are novel and possibly represent related metabolites of the gene cluster. In Arthroderma benhamiae (strain ATCC MYA-4681 / CBS 112371) (Trichophyton mentagrophytes), this protein is Prenyltransferase nscD.